The following is a 468-amino-acid chain: UDP-N-acetylmuramate--L-alanine ligase (468 aa).

Residue 114–120 (GTHGKTT) coordinates ATP.

Belongs to the MurCDEF family.

The protein localises to the cytoplasm. The catalysed reaction is UDP-N-acetyl-alpha-D-muramate + L-alanine + ATP = UDP-N-acetyl-alpha-D-muramoyl-L-alanine + ADP + phosphate + H(+). It functions in the pathway cell wall biogenesis; peptidoglycan biosynthesis. Functionally, cell wall formation. The sequence is that of UDP-N-acetylmuramate--L-alanine ligase from Brucella anthropi (strain ATCC 49188 / DSM 6882 / CCUG 24695 / JCM 21032 / LMG 3331 / NBRC 15819 / NCTC 12168 / Alc 37) (Ochrobactrum anthropi).